A 356-amino-acid chain; its full sequence is GMP reductase (356 aa).

NADP(+) contacts are provided by residues 26–27 (SR), Lys78, 132–134 (DVA), and 183–184 (IG). The K(+) site is built by Gly184, Gly186, and Cys189. The active-site Thioimidate intermediate is Cys189. Thr191 (proton donor/acceptor) is an active-site residue. Arg192 is a binding site for K(+). GMP contacts are provided by residues 222-224 (DGG), 245-246 (GG), 271-273 (GMS), and 289-293 (RASEG). NADP(+) contacts are provided by residues Met272, 288 to 289 (YR), and 317 to 320 (SACT).

It belongs to the IMPDH/GMPR family.

The catalysed reaction is IMP + NH4(+) + NADP(+) = GMP + NADPH + 2 H(+). In terms of biological role, catalyzes the irreversible NADPH-dependent deamination of GMP to IMP. It functions in the conversion of nucleobase, nucleoside and nucleotide derivatives of G to A nucleotides, and in maintaining the intracellular balance of A and G nucleotides. The protein is GMP reductase of Ascaris suum (Pig roundworm).